Consider the following 496-residue polypeptide: Acyltransferase M4 (496 aa).

His-163 (proton acceptor) is an active-site residue.

Belongs to the plant acyltransferase family. As to quaternary structure, monomer.

It participates in secondary metabolite biosynthesis. Acyltransferase; part of the gene cluster that mediates the biosynthesis of squalestatin S1 (SQS1, also known as zaragozic acid A), a heavily oxidized fungal polyketide that offers potent cholesterol lowering activity by targeting squalene synthase (SS). SQS1 is composed of a 2,8-dioxobicyclic[3.2.1]octane-3,4,5-tricarboxyclic acid core that is connected to two lipophilic polyketide arms. These initial steps feature the priming of an unusual benzoic acid starter unit onto the highly reducing polyketide synthase pks2, followed by oxaloacetate extension and product release to generate a tricarboxylic acid containing product. The phenylalanine ammonia lyase (PAL) M7 and the acyl-CoA ligase M9 are involved in transforming phenylalanine into benzoyl-CoA. The citrate synthase-like protein R3 is involved in connecting the C-alpha-carbons of the hexaketide chain and oxaloacetate to afford the tricarboxylic acid unit. The potential hydrolytic enzymes, M8 and M10, are in close proximity to pks2 and may participate in product release. On the other side, the tetraketide arm is synthesized by a the squalestatin tetraketide synthase pks1 and enzymatically esterified to the core in the last biosynthetic step, by the acetyltransferase M4. The biosynthesis of the tetraketide must involve 3 rounds of chain extension. After the first and second rounds methyl-transfer occurs, and in all rounds of extension the ketoreductase and dehydratase are active. The enoyl reductase and C-MeT of pks1 are not active in the final round of extension. The acetyltransferase M4 appears to have a broad substrate selectivity for its acyl CoA substrate, allowing the in vitro synthesis of novel squalestatins. The biosynthesis of SQS1 requires several oxidative steps likely performed by oxidoreductases M1, R1 and R2. Finally, in support of the identification of the cluster as being responsible for SQS1 production, the cluster contains a gene encoding a putative squalene synthase (SS) R6, suggesting a likely mechanism for self-resistance. This chain is Acyltransferase M4, found in Phoma sp. (strain ATCC 20986 / MF5453).